The following is a 2176-amino-acid chain: Nipped-B-like protein scc-2 (2176 aa).

The span at 1–25 (MDPNNLQNSLNGTGNPNFQPVQTNA) shows a compositional bias: polar residues. Disordered stretches follow at residues 1-27 (MDPN…NAGG), 150-170 (PIPQ…QIQS), 464-483 (SEAT…DEEG), 495-514 (MMSV…NQRK), 523-551 (YDSL…DDED), 585-615 (QHFF…IESR), and 669-708 (DSLD…EMDE). Residues 464-473 (SEATQSSSVT) are compositionally biased toward low complexity. Basic and acidic residues-rich tracts occupy residues 597–615 (EDRI…IESR) and 685–695 (SGGDHHHKGDE). The span at 696–708 (NSDESDEEEEMDE) shows a compositional bias: acidic residues. 7 HEAT repeats span residues 1280–1312 (DTYL…IIEA), 1320–1351 (EDVQ…FVLY), 1353–1388 (EEYV…ICEK), 1393–1426 (EMIP…LWFQ), 1692–1723 (EKVF…FCAQ), 1803–1834 (QKYW…TLNQ), and 1840–1871 (GASI…IDSK). The segment at 2149-2176 (ITAANDDYDEEEDGGEDSRGPIMEQMEH) is disordered. Residues 2154–2163 (DDYDEEEDGG) are compositionally biased toward acidic residues.

Belongs to the SCC2/Nipped-B family. May heterodimerize with mau-2/SCC4 to form the cohesin loading complex.

It localises to the nucleus. Its subcellular location is the chromosome. In terms of biological role, plays an important role in the loading of the cohesin complex on to meiotic chromosomes. Forms a heterodimeric complex (also known as cohesin loading complex) with mau-2/SCC4 which mediates the loading of the cohesin complex onto chromatin. Plays an essential role in cell division during embryonic development. Promotes normal chromosome organization during meiosis. Required for the assembly of the synaptonemal complex between homologous chromosomes to promote sister chromatid cohesion during meiosis. Required for chromosome segregation during mitosis and meiosis. Plays a role in DNA double-strand break (DSB) repair during meiotic recombination and promotes the assembly of the 9-1-1 cell-cycle checkpoint response complex which is required for inducing apoptosis in response to DNA damage, at DNA damage sites. The polypeptide is Nipped-B-like protein scc-2 (Caenorhabditis elegans).